The following is a 235-amino-acid chain: Sugar fermentation stimulation protein homolog (235 aa).

This sequence belongs to the SfsA family.

This Bartonella henselae (strain ATCC 49882 / DSM 28221 / CCUG 30454 / Houston 1) (Rochalimaea henselae) protein is Sugar fermentation stimulation protein homolog.